The sequence spans 362 residues: Probable cinnamyl alcohol dehydrogenase 9 (362 aa).

Cys-45 is a Zn(2+) binding site. Position 47 (Ser-47) interacts with NADP(+). His-67, Glu-68, Cys-98, Cys-101, Cys-104, Cys-112, and Cys-167 together coordinate Zn(2+). Residues Thr-171, 192-197 (GLGGLG), 215-220 (STSPWK), Thr-255, Gly-279, and 302-304 (SMI) each bind NADP(+).

It belongs to the zinc-containing alcohol dehydrogenase family. In terms of assembly, homodimer. It depends on Zn(2+) as a cofactor.

The enzyme catalyses (E)-cinnamyl alcohol + NADP(+) = (E)-cinnamaldehyde + NADPH + H(+). It carries out the reaction (E)-coniferol + NADP(+) = (E)-coniferaldehyde + NADPH + H(+). It catalyses the reaction (E)-sinapyl alcohol + NADP(+) = (E)-sinapaldehyde + NADPH + H(+). The catalysed reaction is (E)-4-coumaroyl alcohol + NADP(+) = (E)-4-coumaraldehyde + NADPH + H(+). The enzyme catalyses (E)-caffeyl alcohol + NADP(+) = (E)-caffeyl aldehyde + NADPH + H(+). It functions in the pathway aromatic compound metabolism; phenylpropanoid biosynthesis. Its function is as follows. Involved in lignin biosynthesis. Catalyzes the final step specific for the production of lignin monomers. Catalyzes the NADPH-dependent reduction of coniferaldehyde, 5-hydroxyconiferaldehyde, sinapaldehyde, 4-coumaraldehyde and caffeyl aldehyde to their respective alcohols. The sequence is that of Probable cinnamyl alcohol dehydrogenase 9 from Oryza sativa subsp. japonica (Rice).